Reading from the N-terminus, the 93-residue chain is Small ribosomal subunit protein uS19 (93 aa).

It belongs to the universal ribosomal protein uS19 family.

In terms of biological role, protein S19 forms a complex with S13 that binds strongly to the 16S ribosomal RNA. The polypeptide is Small ribosomal subunit protein uS19 (Ehrlichia ruminantium (strain Welgevonden)).